The primary structure comprises 411 residues: Isocitrate dehydrogenase [NADP] peroxisomal (411 aa).

NADP(+) contacts are provided by residues 78–80 (TIT) and Arg85. A substrate-binding site is contributed by Thr80. Substrate is bound by residues 97–103 (SPNGTLR), Arg112, and Arg135. Asp254 lines the Mn(2+) pocket. Position 262 (Lys262) interacts with NADP(+). Residue Asp277 coordinates Mn(2+). NADP(+)-binding positions include 312 to 317 (GTVTRH) and Asn330.

This sequence belongs to the isocitrate and isopropylmalate dehydrogenases family. It depends on Mg(2+) as a cofactor. Mn(2+) serves as cofactor.

It localises to the peroxisome. The catalysed reaction is D-threo-isocitrate + NADP(+) = 2-oxoglutarate + CO2 + NADPH. May play a role in N-alkane metabolism, glutamate synthesis, and/or NADPH generation in the peroxisomes. This is Isocitrate dehydrogenase [NADP] peroxisomal (IDP2) from Candida tropicalis (Yeast).